Reading from the N-terminus, the 417-residue chain is Calreticulin (417 aa).

Residues 1-17 form the signal peptide; that stretch reads MLLSVPLLLGLLGLAAA. Residues 18–197 form an N-domain region; that stretch reads EPAVYFKEQF…NSQVESGSLE (180 aa). Gln-26 lines the Ca(2+) pocket. Lys-48 carries the N6-acetyllysine modification. Ca(2+)-binding residues include Lys-62 and Lys-64. At Lys-64 the chain carries N6-(2-hydroxyisobutyryl)lysine. Cysteines 105 and 137 form a disulfide. Residues Tyr-109, Lys-111, Tyr-128, and Asp-135 each contribute to the an alpha-D-glucoside site. N6-acetyllysine is present on Lys-159. The 1-1 repeat unit spans residues 191–202; sequence VESGSLEDDWDF. Residues 191–255 are 4 X approximate repeats; that stretch reads VESGSLEDDW…DAKKPEDWDE (65 aa). Positions 193-277 are disordered; that stretch reads SGSLEDDWDF…NPEYKGEWKP (85 aa). The interval 198–308 is P-domain; sequence DDWDFLPPKK…YSPDANIYAY (111 aa). The segment covering 207–251 has biased composition (basic and acidic residues); the sequence is KIKDPDAAKPEDWDERAKIDDPTDSKPEDWDKPEHIPDPDAKKPE. Position 209 is an N6-acetyllysine (Lys-209). A run of 6 repeats spans residues 210-221, 227-238, 244-255, 259-269, 273-283, and 287-297. Residues 237 to 270 form an interaction with PPIB region; the sequence is DKPEHIPDPDAKKPEDWDEEMDGEWEPPVIQNPE. The segment covering 252–261 has biased composition (acidic residues); that stretch reads DWDEEMDGEW. The 3 X approximate repeats stretch occupies residues 259-297; that stretch reads GEWEPPVIQNPEYKGEWKPRQIDNPDYKGTWIHPEIDNP. The interval 309–417 is C-domain; it reads DSFAVLGLDL…TTPGQTKDEL (109 aa). Asp-317 is an an alpha-D-glucoside binding site. Ca(2+) is bound at residue Asp-328. Positions 350-417 are disordered; sequence TKASEKQMKD…TTPGQTKDEL (68 aa). Residues 352–379 are compositionally biased toward basic and acidic residues; that stretch reads ASEKQMKDKQDEEQRLKEEEEDKKRKEE. Residues 380 to 408 are compositionally biased toward acidic residues; it reads EEAEDKEDEDDRDEDEEDEDEKEEDEEDT. Residues 414-417 carry the Prevents secretion from ER motif; the sequence is KDEL.

This sequence belongs to the calreticulin family. Monomer. Component of an EIF2 complex at least composed of CELF1/CUGBP1, CALR, CALR3, EIF2S1, EIF2S2, HSP90B1 and HSPA5. Interacts with PDIA3/ERp57 and SPACA9. Interacts with TRIM21. Interacts with NR3C1. Interacts with PPIB. Interacts (via P-domain) with PDIA5. Interacts with GABARAP. Interacts with CLCC1.

The protein resides in the endoplasmic reticulum lumen. It is found in the cytoplasm. Its subcellular location is the cytosol. It localises to the cytolytic granule. The protein localises to the secreted. The protein resides in the extracellular space. It is found in the extracellular matrix. Its subcellular location is the cell surface. It localises to the sarcoplasmic reticulum lumen. The protein localises to the cytoplasmic vesicle. The protein resides in the secretory vesicle. It is found in the cortical granule. Its function is as follows. Calcium-binding chaperone that promotes folding, oligomeric assembly and quality control in the endoplasmic reticulum (ER) via the calreticulin/calnexin cycle. This lectin interacts transiently with almost all of the monoglucosylated glycoproteins that are synthesized in the ER. Interacts with the DNA-binding domain of NR3C1 and mediates its nuclear export. Involved in maternal gene expression regulation. May participate in oocyte maturation via the regulation of calcium homeostasis. Present in the cortical granules of non-activated oocytes, is exocytosed during the cortical reaction in response to oocyte activation and might participate in the block to polyspermy. This Cricetulus griseus (Chinese hamster) protein is Calreticulin (CALR).